A 311-amino-acid chain; its full sequence is Pyrimidine-specific ribonucleoside hydrolase RihA (311 aa).

Histidine 240 is a catalytic residue.

This sequence belongs to the IUNH family. RihA subfamily.

Functionally, hydrolyzes with equal efficiency cytidine or uridine to ribose and cytosine or uracil, respectively. This chain is Pyrimidine-specific ribonucleoside hydrolase RihA, found in Escherichia coli O157:H7.